Reading from the N-terminus, the 907-residue chain is Leucine-rich repeat-containing G-protein coupled receptor 5 (907 aa).

The N-terminal stretch at 1 to 21 (MDTSRVRMLLSLLALLQLVAA) is a signal peptide. Residues 22–561 (GSPPRPDTMP…EHLFGSWLIR (540 aa)) lie on the Extracellular side of the membrane. One can recognise an LRRNT domain in the interval 33-64 (GCPSYCHCELDGRMLLRVDCSDLGLSELPSNL). 2 disulfides stabilise this stretch: cysteine 34–cysteine 40 and cysteine 38–cysteine 52. 17 LRR repeats span residues 44-64 (GRMLLRVDCSDLGLSELPSNL), 65-88 (SVFTSYLDLSMNNISQLPASLLHR), 89-112 (LRFLEELRLAGNALTHIPKGAFAG), 114-136 (HSLKVLMLQNNQLRQVPEEALQN), 137-160 (LRSLQSLRLDANHISYVPPSCFSG), 162-184 (HSLRHLWLDDNALTDVPVQAFRS), 186-208 (SALQAMTLALNKIHHIADHAFGN), 209-232 (LSSLVVLHLHNNRIHSLGKKCFDG), 233-256 (LHSLETLDLNYNNLDEFPTAIKTL), 257-279 (SNLKELGFHSNNIRSIPERAFVG), 281-303 (PSLITIHFYDNPIQFVGISAFQH), 304-327 (LPELRTLTLNGASQITEFPDLTGT), 328-350 (ATLESLTLTGAKISSLPQTVCDQ), 351-375 (LPNLQVLDLSYNLLEDLPSLSGCQK), 377-396 (QKIDLRHNEIYEIKGGTFQQ), 397-420 (LFNLRSLNLARNKIAIIHPNAFST), and 422-444 (PSLIKLDLSSNLLSSFPVTGLHG). N-linked (GlcNAc...) asparagine glycans are attached at residues asparagine 63 and asparagine 77. Asparagine 208 carries an N-linked (GlcNAc...) asparagine glycan. Cysteine 348 and cysteine 373 are disulfide-bonded. Cysteine 479 and cysteine 541 are joined by a disulfide. Residues 562–582 (IGVWTTAVLALSCNALVAFTV) form a helical membrane-spanning segment. The stretch at 564-585 (VWTTAVLALSCNALVAFTVFRT) is one LRR 18 repeat. Over 583-595 (FRTPLYISSIKLL) the chain is Cytoplasmic. The helical transmembrane segment at 596 to 616 (IGVIAVVDILMGVSSAILAVV) threads the bilayer. Residues 617 to 638 (DTFTFGSFAQHGAWWEGGIGCQ) lie on the Extracellular side of the membrane. Cysteine 637 and cysteine 712 are oxidised to a cystine. The helical transmembrane segment at 639-659 (IVGFLSIFASESSVFLLTLAA) threads the bilayer. Residues 660–682 (LERGFSVKCSSKFEMKAPLSSLK) lie on the Cytoplasmic side of the membrane. Residues 683 to 703 (AIILLCVLLALTIATVPLLGG) traverse the membrane as a helical segment. The Extracellular segment spans residues 704 to 723 (SEYNASPLCLPLPFGEPSTT). A helical membrane pass occupies residues 724–744 (GYMVALVLLNSLCFLIMTIAY). Residues 745–775 (TRLYCSLEKGELENLWDCSMVKHTALLLFTN) lie on the Cytoplasmic side of the membrane. A helical transmembrane segment spans residues 776 to 796 (CILYCPVAFLSFSSLLNLTFI). The Extracellular portion of the chain corresponds to 797–802 (SPEVIK). The chain crosses the membrane as a helical span at residues 803-823 (FILLVIVPLPACLNPLLYIVF). At 824-907 (NPHFKEDMGS…LSSVAFVPCL (84 aa)) the chain is on the cytoplasmic side.

It belongs to the G-protein coupled receptor 1 family. Identified in a complex composed of RNF43, LGR5 and RSPO1. Also interacts with other R-spondin ligands, including RSPO2, RSPO3 and RSPO4.

The protein resides in the cell membrane. Its subcellular location is the golgi apparatus. It localises to the trans-Golgi network membrane. Functionally, receptor for R-spondins that potentiates the canonical Wnt signaling pathway and acts as a stem cell marker of the intestinal epithelium and the hair follicle. Upon binding to R-spondins (RSPO1, RSPO2, RSPO3 or RSPO4), associates with phosphorylated LRP6 and frizzled receptors that are activated by extracellular Wnt receptors, triggering the canonical Wnt signaling pathway to increase expression of target genes. In contrast to classical G-protein coupled receptors, does not activate heterotrimeric G-proteins to transduce the signal. Involved in the development and/or maintenance of the adult intestinal stem cells during postembryonic development. The polypeptide is Leucine-rich repeat-containing G-protein coupled receptor 5 (Lgr5) (Rattus norvegicus (Rat)).